The sequence spans 462 residues: Argininosuccinate lyase (462 aa).

Belongs to the lyase 1 family. Argininosuccinate lyase subfamily.

The protein localises to the cytoplasm. The catalysed reaction is 2-(N(omega)-L-arginino)succinate = fumarate + L-arginine. The protein operates within amino-acid biosynthesis; L-arginine biosynthesis; L-arginine from L-ornithine and carbamoyl phosphate: step 3/3. This is Argininosuccinate lyase from Thermus thermophilus (strain ATCC BAA-163 / DSM 7039 / HB27).